Consider the following 508-residue polypeptide: Abl interactor 1 (508 aa).

Ala2 is subject to N-acetylalanine. The segment at 18–79 (ALIESYQNLT…NNVLQLLDIQ (62 aa)) is required for binding to WASF1. The t-SNARE coiled-coil homology domain maps to 45 to 107 (KALEETKAYT…DIHKEKVARR (63 aa)). At Tyr53 the chain carries Phosphotyrosine. Disordered regions lie at residues 159–290 (KHGN…APPL), 306–375 (APGS…LTPQ), and 388–421 (NIADSPTPPPPPPPDDIPMFDDSPPPPPPPPVDY). Residues 161–175 (GNNQPARTGTLSRTN) are compositionally biased toward polar residues. A phosphothreonine mark is found at Thr174 and Thr178. A phosphoserine mark is found at Ser183 and Ser187. Tyr213 bears the Phosphotyrosine; by ABL1 mark. Thr215 carries the phosphothreonine modification. Residues Ser216, Ser222, and Ser225 each carry the phosphoserine modification. Positions 222–235 (SQHSPGRTASLNQR) are enriched in polar residues. The segment covering 248–258 (SRENSGSSSIG) has biased composition (low complexity). Residues 278–290 (VPPPSGAPPAPPL) show a composition bias toward pro residues. Residues 307-322 (PGSQYGTMTRQISRHN) show a composition bias toward polar residues. Phosphoserine occurs at positions 319 and 323. Residues 337–347 (PSVTAQFSAQP) show a composition bias toward polar residues. Composition is skewed to pro residues over residues 393 to 403 (PTPPPPPPPDD) and 410 to 419 (SPPPPPPPPV). Positions 446 to 505 (NYIEKVVAIYDYTKDKDDELSFMEGAIIYVIKKNDDGWYEGVCNRVTGLFPGNYVESIMH) constitute an SH3 domain. Tyr455 is modified (phosphotyrosine). Ser466 bears the Phosphoserine mark. Residue Thr507 is modified to Phosphothreonine.

Belongs to the ABI family. Interacts with ABL1, ENAH, STX1A, SNAP25, VAMP2, EPS8, and through its N-terminus with WASF1. Part of a complex consisting of ABI1, STX1A and SNAP25. Part of a complex consisting of ABI1, EPS8 and SOS1. Interacts with SOS1, SOS2, GRB2, SPTA1 and the first SH3 domain of NCK1. Isoform 6 does not interact with NCK1. Component of the WAVE2 complex composed of ABI1, CYFIP1/SRA1, NCKAP1/NAP1 (NCKAP1l/HEM1 in hematopoietic cells) and WASF2/WAVE2. Interacts (via SH3 domain) with SHANK2 and SHANK3, but not SHANK1; the interaction is direct. Interacts with the heterodimer MYC:MAX; the interaction may enhance MYC:MAX transcriptional activity. Interacts with FNBP1L (via the SH3 domain), WASF2, and CDC42, but only in the presence of FNBP1L. As to quaternary structure, (Microbial infection) Interacts with human cytomegalovirus/HHV-5 protein UL135. Phosphorylated on tyrosine residues after serum stimulation or induction by v-Abl. Seems to be phosphorylated at Tyr-53 by ABL1, required for nuclear but not for synaptic localization. Widely expressed, with highest expression in brain.

The protein resides in the cytoplasm. It localises to the nucleus. It is found in the cell projection. Its subcellular location is the lamellipodium. The protein localises to the filopodium. The protein resides in the growth cone. It localises to the postsynaptic density. It is found in the cytoskeleton. May act in negative regulation of cell growth and transformation by interacting with nonreceptor tyrosine kinases ABL1 and/or ABL2. May play a role in regulation of EGF-induced Erk pathway activation. Involved in cytoskeletal reorganization and EGFR signaling. Together with EPS8 participates in transduction of signals from Ras to Rac. In vitro, a trimeric complex of ABI1, EPS8 and SOS1 exhibits Rac specific guanine nucleotide exchange factor (GEF) activity and ABI1 seems to act as an adapter in the complex. Regulates ABL1/c-Abl-mediated phosphorylation of ENAH. Recruits WASF1 to lamellipodia and there seems to regulate WASF1 protein level. In brain, seems to regulate the dendritic outgrowth and branching as well as to determine the shape and number of synaptic contacts of developing neurons. The sequence is that of Abl interactor 1 from Homo sapiens (Human).